The chain runs to 534 residues: Nuclear polyadenylated RNA-binding protein 4 (534 aa).

A disordered region spans residues Met1–Leu154. Phosphoserine occurs at positions 2 and 3. The span at Gly13–Asn30 shows a compositional bias: basic and acidic residues. The segment covering Ser37–Asp78 has biased composition (low complexity). 2 positions are modified to phosphoserine: Ser51 and Ser87. Over residues Ala81–Glu98 the composition is skewed to basic and acidic residues. Low complexity-rich tracts occupy residues Ser99 to Ala112 and Gln121 to Gln144. The span at Thr145–Leu154 shows a compositional bias: basic and acidic residues. RRM domains follow at residues Cys159–Lys241 and Gly243–Pro320. Ser206 bears the Phosphoserine mark. Disordered regions lie at residues Lys316–Gln354 and Met415–Arg534. Residues Gly336 to Gln354 are compositionally biased toward low complexity. Over residues Met420 to Asp459 the composition is skewed to polar residues. A Phosphothreonine modification is found at Thr458. Residues Ser460 and Ser462 each carry the phosphoserine modification. The segment covering Ser460–Ser475 has biased composition (low complexity). Residues Asn478–His505 are compositionally biased toward basic and acidic residues. Omega-N-methylarginine is present on Arg519. Residues Asn523 to Arg534 are compositionally biased toward low complexity.

As to quaternary structure, interacts with NAM7. Post-translationally, methylated by HMT1. The methylation is required for nuclear export.

The protein resides in the cytoplasm. It is found in the nucleus. Its subcellular location is the stress granule. In terms of biological role, RNA-binding protein, which is involved in the polyadenylation-dependent pre-mRNA 3'-end formation and cooperates with the cleavage factor CFIA complex and the cleavage and polyadenylation factor (CPF) complex. May be involved in regulation of poly(A) site selection. Is involved in nonsense-mediated mRNA decay. Seems to bind to an RNA downstream sequence element (DSE) located 3' of a nonsense codon and may mark the transcript for decay. This chain is Nuclear polyadenylated RNA-binding protein 4, found in Saccharomyces cerevisiae (strain ATCC 204508 / S288c) (Baker's yeast).